We begin with the raw amino-acid sequence, 146 residues long: Endothelial differentiation-related factor 1 homolog (146 aa).

The tract at residues R13–V53 is disordered. The span at S17–Q31 shows a compositional bias: low complexity. Residues R32–K41 are compositionally biased toward basic and acidic residues. In terms of domain architecture, HTH cro/C1-type spans I80–K134. A DNA-binding region (H-T-H motif) is located at residues Q91 to C110.

Its subcellular location is the nucleus. Probable transcriptional coactivator. This Danio rerio (Zebrafish) protein is Endothelial differentiation-related factor 1 homolog (edf1).